The following is a 1258-amino-acid chain: Splicing factor, arginine/serine-rich 19 (1258 aa).

6 disordered regions span residues 1–32 (MEEEDESRGKTEESGEDRGDGPPDRDPALSPS), 159–345 (KTVS…PRRR), 370–398 (GGPALPLPPLPPTDPEIEEGEIVQPEEEP), 410–1034 (PRQP…PPPM), 1114–1154 (GSLP…DKYL), and 1223–1258 (FRKHGRKPGDPPGPPRPPKEPGPPDKGGPGLPLPPL). Over residues 7–27 (SRGKTEESGEDRGDGPPDRDP) the composition is skewed to basic and acidic residues. The span at 193–207 (SSASSSPSPSPSSSS) shows a compositional bias: low complexity. A compositionally biased stretch (pro residues) spans 208–223 (PSPPPPPPPPPPPALP). Residues 228–237 (DIYDPFHPTD) show a composition bias toward basic and acidic residues. Position 241 is a phosphoserine (Ser-241). Residues 256–266 (TGSNPSSSAGT) show a composition bias toward polar residues. Acidic residues predominate over residues 269 to 283 (PEEEEEEEEEEEEEG). Thr-329 is modified (phosphothreonine). The segment covering 374–383 (LPLPPLPPTD) has biased composition (pro residues). A compositionally biased stretch (acidic residues) spans 384-395 (PEIEEGEIVQPE). The span at 414–426 (PASVATLASVAAP) shows a compositional bias: low complexity. Phosphoserine is present on residues Ser-444 and Ser-449. The segment covering 480 to 491 (KILTQRRERYRQ) has biased composition (basic residues). Ser-493, Ser-495, Ser-512, and Ser-520 each carry phosphoserine. Basic residues-rich tracts occupy residues 540–555 (TARRRSRSRSRRRSRS) and 562–579 (RGSHRSRSREKRRRRRRS). Phosphoserine occurs at positions 579 and 581. The span at 594 to 613 (RERHRGKRREGGKKKKKRSR) shows a compositional bias: basic residues. Residues 614-625 (SRAEKRSGDLEK) are compositionally biased toward basic and acidic residues. A Phosphothreonine modification is found at Thr-665. Phosphoserine is present on residues Ser-678 and Ser-684. Tyr-691 is modified (phosphotyrosine). Ser-693 and Ser-697 each carry phosphoserine. Basic and acidic residues-rich tracts occupy residues 698 to 711 (ADERGAKGDKDRRR) and 721 to 743 (SREKASRRKALDGDRGRDRDRSS). Composition is skewed to low complexity over residues 752-777 (SAPGSGALPKAPPSSGSSSSSSSCSS) and 795-806 (SSTTPAKDSSSS). A Glycyl lysine isopeptide (Lys-Gly) (interchain with G-Cter in SUMO2) cross-link involves residue Lys-814. Positions 815–833 (FSRDRESRSPFLKPDERAP) are enriched in basic and acidic residues. Phosphoserine occurs at positions 821 and 823. The span at 845-877 (KPKKTKAKAKAGAKKAKGTKGKTKPSKTRKKVR) shows a compositional bias: basic residues. 4 positions are modified to phosphoserine: Ser-878, Ser-885, Ser-912, and Ser-914. The span at 924–937 (STPPPKVAPPPPAL) shows a compositional bias: pro residues. Phosphothreonine is present on residues Thr-925 and Thr-938. Residues 940 to 949 (DSQTVDSSCK) are compositionally biased toward polar residues. Ser-941 carries the post-translational modification Phosphoserine. Thr-950 is modified (phosphothreonine). A compositionally biased stretch (acidic residues) spans 971 to 986 (EEEEEEEEEEEEEEEQ). Residues 987–1019 (QPATTTATSTAAAAPSTAPSAGSTAGDSGAEDG) show a composition bias toward low complexity. The necessary for interaction with the CTD domain of POLR2A stretch occupies residues 1133–1258 (PASDKREGSS…GGPGLPLPPL (126 aa)). Residues 1135 to 1154 (SDKREGSSSSEGRGDTDKYL) show a composition bias toward basic and acidic residues. Positions 1246–1258 (PDKGGPGLPLPPL) are enriched in pro residues.

This sequence belongs to the splicing factor SR family. As to quaternary structure, interacts with POLR2A.

Its subcellular location is the nucleus. Its function is as follows. May function in pre-mRNA splicing. The chain is Splicing factor, arginine/serine-rich 19 (Scaf1) from Rattus norvegicus (Rat).